A 261-amino-acid polypeptide reads, in one-letter code: Cathepsin G (261 aa).

Positions 1–18 (MQPLLLLLTFILLQGDEA) are cleaved as a signal peptide. A propeptide spans 19–20 (GK) (activation peptide). An important for antimicrobial activity region spans residues 21-25 (IIGGR). The Peptidase S1 domain maps to 21-243 (IIGGREARPH…FMPWIKRTMR (223 aa)). A disulfide bridge connects residues Cys49 and Cys65. Residue His64 is the Charge relay system of the active site. N-linked (GlcNAc...) asparagine glycosylation is present at Asn71. Residues 97 to 111 (HPDYNPQNIRNDIML) form an important for antimicrobial activity region. The active-site Charge relay system is Asp108. 2 disulfides stabilise this stretch: Cys142/Cys207 and Cys172/Cys186. The Charge relay system role is filled by Ser201.

It belongs to the peptidase S1 family. In adult, detected only in bone marrow where expression is restricted to a small population of early myeloid cells.

It localises to the cell membrane. Its subcellular location is the cytoplasmic granule. It is found in the secreted. The protein localises to the cytoplasm. The protein resides in the cytosol. It localises to the lysosome. Its subcellular location is the nucleus. It carries out the reaction Specificity similar to chymotrypsin C.. Its activity is regulated as follows. Inhibited by chymostatin, phenylmethanesulfonyl fluoride and diisopropyl fluorophosphate. Its function is as follows. Serine protease with trypsin- and chymotrypsin-like specificity. Also displays antibacterial activity against Gram-negative and Gram-positive bacteria independent of its protease activity. Prefers Phe and Tyr residues in the P1 position of substrates but also cleaves efficiently after Trp and Leu. Shows a preference for negatively charged amino acids in the P2' position and for aliphatic amino acids both upstream and downstream of the cleavage site. Required for recruitment and activation of platelets which is mediated by the F2RL3/PAR4 platelet receptor. Binds reversibly to and stimulates B cells and CD4(+) and CD8(+) T cells. Also binds reversibly to natural killer (NK) cells and enhances NK cell cytotoxicity through its protease activity. Cleaves complement C3. Cleaves vimentin. Cleaves thrombin receptor F2R/PAR1. Cleaves the synovial mucin-type protein PRG4/lubricin. Cleaves and activates IL36G which promotes expression of chemokines CXCL1 and CXLC8 in keratinocytes. Cleaves IL33 into mature forms which have greater activity than the unprocessed form. Cleaves coagulation factor F8 to produce a partially activated form. Also cleaves and activates coagulation factor F10. Cleaves leukocyte cell surface protein SPN/CD43 to release its extracellular domain and trigger its intramembrane proteolysis by gamma-secretase, releasing the CD43 cytoplasmic tail chain (CD43-ct) which translocates to the nucleus. During apoptosis, cleaves SMARCA2/BRM to produce a 160 kDa cleavage product which localizes to the cytosol. Cleaves MBP in B cell lysosomes at '221-Phe-|-Lys-222', degrading the major immunogenic MBP epitope and preventing the activation of MBP-specific autoreactive T cells. Cleaves annexin ANXA1 and antimicrobial peptide CAMP to produce peptides which act on neutrophil N-formyl peptide receptors to enhance the release of CXCL2. Acts as a ligand for the N-formyl peptide receptor FPR1, enhancing phagocyte chemotaxis. Has antibacterial activity against the Gram-negative bacteria N.gonorrhoeae and P.aeruginosa. Likely to act against N.gonorrhoeae by interacting with N.gonorrhoeae penA/PBP2. Exhibits potent antimicrobial activity against the Gram-positive bacterium L.monocytogenes. Has antibacterial activity against the Gram-positive bacterium S.aureus and degrades S.aureus biofilms, allowing polymorphonuclear leukocytes to penetrate the biofilm and phagocytose bacteria. Has antibacterial activity against M.tuberculosis. Induces platelet aggregation which is strongly potentiated in the presence of ELANE. The polypeptide is Cathepsin G (Ctsg) (Mus musculus (Mouse)).